A 279-amino-acid chain; its full sequence is Oxygen-dependent coproporphyrinogen-III oxidase (279 aa).

Serine 102 is a substrate binding site. Residues histidine 106 and histidine 116 each coordinate a divalent metal cation. Histidine 116 serves as the catalytic Proton donor. 118 to 120 (NTR) contributes to the substrate binding site. Histidine 149 and histidine 179 together coordinate a divalent metal cation. The segment at 244–279 (YVEFNLLYDRGTKFGLMTDGNVEAILMSLPPEVKFN) is important for dimerization.

This sequence belongs to the aerobic coproporphyrinogen-III oxidase family. As to quaternary structure, homodimer. The cofactor is a divalent metal cation.

The protein resides in the cytoplasm. It carries out the reaction coproporphyrinogen III + O2 + 2 H(+) = protoporphyrinogen IX + 2 CO2 + 2 H2O. It functions in the pathway porphyrin-containing compound metabolism; protoporphyrin-IX biosynthesis; protoporphyrinogen-IX from coproporphyrinogen-III (O2 route): step 1/1. Involved in the heme biosynthesis. Catalyzes the aerobic oxidative decarboxylation of propionate groups of rings A and B of coproporphyrinogen-III to yield the vinyl groups in protoporphyrinogen-IX. The protein is Oxygen-dependent coproporphyrinogen-III oxidase of Rickettsia akari (strain Hartford).